Here is a 241-residue protein sequence, read N- to C-terminus: Ubiquinone biosynthesis O-methyltransferase (241 aa).

Positions 46, 66, 87, and 131 each coordinate S-adenosyl-L-methionine.

Belongs to the methyltransferase superfamily. UbiG/COQ3 family.

It carries out the reaction a 3-demethylubiquinol + S-adenosyl-L-methionine = a ubiquinol + S-adenosyl-L-homocysteine + H(+). The catalysed reaction is a 3-(all-trans-polyprenyl)benzene-1,2-diol + S-adenosyl-L-methionine = a 2-methoxy-6-(all-trans-polyprenyl)phenol + S-adenosyl-L-homocysteine + H(+). It participates in cofactor biosynthesis; ubiquinone biosynthesis. Its function is as follows. O-methyltransferase that catalyzes the 2 O-methylation steps in the ubiquinone biosynthetic pathway. The protein is Ubiquinone biosynthesis O-methyltransferase of Bordetella pertussis (strain Tohama I / ATCC BAA-589 / NCTC 13251).